The following is a 609-amino-acid chain: UvrABC system protein C (609 aa).

Positions 13–91 (HQPGVYRMFD…IKAFQPRYNV (79 aa)) constitute a GIY-YIG domain. The UVR domain occupies 201 to 236 (QQVLEHLIKKMEQASMQLNFEQAAYFRDQIQAIRAV).

This sequence belongs to the UvrC family. Interacts with UvrB in an incision complex.

The protein resides in the cytoplasm. In terms of biological role, the UvrABC repair system catalyzes the recognition and processing of DNA lesions. UvrC both incises the 5' and 3' sides of the lesion. The N-terminal half is responsible for the 3' incision and the C-terminal half is responsible for the 5' incision. This chain is UvrABC system protein C, found in Histophilus somni (strain 129Pt) (Haemophilus somnus).